Here is a 265-residue protein sequence, read N- to C-terminus: MADTQPAQEAPAADAPRAERNFGRGRGGRGGRGRGRGGPGEEKEWVPCTKLGRLVKAQKVTSLEEIFLFSMPIKEHQIVDTLIAEGKLHDEMMKIYPVQKATSAGQRTRFKAFNVVGDCDGHIGIGARVGKEVSLAIRASMIAAKLNIVPVRRGYWGNKIGEPHTIPMKVTGKCGSVAVRLVPAPRGTGIVAAPVPKKILEFAGVEDVYTSSRGKTRTHGNLIMATFYALRKTYGFLTPDLWADTEPSRDPTDEHGELLAEMTTA.

Positions 1-15 (MADTQPAQEAPAADA) are enriched in low complexity. Residues 1-44 (MADTQPAQEAPAADAPRAERNFGRGRGGRGGRGRGRGGPGEEKE) are disordered. The segment covering 26–35 (RGGRGGRGRG) has biased composition (basic residues). The 64-residue stretch at 88–151 (LHDEMMKIYP…IAAKLNIVPV (64 aa)) folds into the S5 DRBM domain. A disordered region spans residues 245-265 (TEPSRDPTDEHGELLAEMTTA). A compositionally biased stretch (basic and acidic residues) spans 246–258 (EPSRDPTDEHGEL).

It belongs to the universal ribosomal protein uS5 family.

Functionally, component of the ribosome, a large ribonucleoprotein complex responsible for the synthesis of proteins in the cell. The small ribosomal subunit (SSU) binds messenger RNAs (mRNAs) and translates the encoded message by selecting cognate aminoacyl-transfer RNA (tRNA) molecules. The large subunit (LSU) contains the ribosomal catalytic site termed the peptidyl transferase center (PTC), which catalyzes the formation of peptide bonds, thereby polymerizing the amino acids delivered by tRNAs into a polypeptide chain. The nascent polypeptides leave the ribosome through a tunnel in the LSU and interact with protein factors that function in enzymatic processing, targeting, and the membrane insertion of nascent chains at the exit of the ribosomal tunnel. Plays a role in the assembly and function of the 40S ribosomal subunit. Mutations in this protein affects the control of translational fidelity. Involved in nucleolar processing of pre-18S ribosomal RNA and ribosome assembly. In Leishmania amazonensis, this protein is Small ribosomal subunit protein uS5.